The following is a 1575-amino-acid chain: MPHEELPSLQRPRYGSIVDDERLSAEEMDERRRQNIAYEYLCHLEEAKRWMEVCLVEELPPTTELEEGLRNGVYLAKLAKFFAPKMVSEKKIYDVEQTRYKKSGLHFRHTDNTVQWLRAMEAIGLPKIFYPETTDVYDRKNIPRMIYCIHALSLYLFKLGIAPQIQDLLGKVDFTEEEISNMRKELEKYGIQMPAFSKIGGILANELSVDEAALHAAVIAINEAIEKGVAKQTIITLRNPNAVLTCVDDSLSQEYQKELWEAKKKKEESAKLKNSCISEEERDAYEELLTQAEIQSNISTVNRMAAVDHINAVLQEGDPENTLLALKKPEAQLPAVYPFAAVMYQNELFNLQKQNTSNYLAHEELLIAVEMLSAVALLNQALESSDLVAVQNQLRSPTIGFNNLDEAHVDRYADALLSVKQEALSQGQDTLSWNEIQNCIDMINNQIQEENDRMVVLGYINEAIDAGNPLKTLDTLLLPTANIRDVDPDCAQHYQDVLFYTKSQKLGDPKNVSKVLWLDEIQQAINEANVDENRAKQWVTLVVDVNECLDRKQSDHILTALKSSPSNIHNILPECANKYYDTLVKAKESKTDNESSEGSWVTLNVQEKYNYYYNTDSKEGSWVPPELCLSKESWLTGEEIEDIVEEVTSDYIREKLWSASEDLLVRFEATTLGPALREEFEARKAFLYEQTESVVKIQAFWKGFKQRQEYLHRQQVFAGNVDSVVKIQSWFRMVTARKSYLSRLRYFEDHKNEIVKIQSLLRASKARDDYKALVGSENPPLTVIRKFVYLLDQSDLDFQEELEVARLREEVVTKIRANQQLEKDLNLMDIKIGLLVKNRITLEDVISHRKKLNKKKGGEIEILNNTDNKGIKSLSKERRKTLETYQQLFYLLQTKPSYLAKLIFQMPQNKSTKFMDTVIFTLYNYASNQREEYLLLKLFKTALEEEIKSKVDQVQDIVTGNPTVIKMVVSFNRGARGQNTLRQLLAPVVKEIIEDKALVINTNPVEVYKAWVNQLETQTGEASKLPYDVTTEQALTYPEVKNKLEASIENLRKVTDKVLGSIISSLDLLPYGLRYIAKVLKNSIREKFPDATEEELLKIVGNLLYYRYMNPAIVAPDGFDIIDMTAGGQINSNQRRNLGSVAKVLQHAASNKLFEGENEHLSSMNNYLSETYQEFRKYFQEACDVPEPEEKFNMDKYTDLVTVSKPVIYISIEEIINTHLLLLEHQDAIATEKSDLLNELLESLGEVPTVESFLGEGAVDPNDPNKENTLNQLSKTEISLSLTSKYDVKDGEAVDGRSLMIKTKKLIIDVTRNQPGSTLTEILETPATGQQELEHAKDMESRAVVDSRTPEEGKQSQAVIEDARLPLEQKKRKIQRNLRTLEQTGHVSSKNKYQDILNEIAKDIRNQRIHRKLRKAELSKLQQTLNALNKKAAFYEDQINYYDTYIKTCVDNLKRKNSRRSIKLDGKAEPKGTKRVKPVRYTAAKLHDKGVLLGIDDLQTNQFKNVMFDIIATEDMGIFDVRSKFLGVEMEKVQLNIQDLLQMQYEGVAVMKMFDKVKVNVNLLIYLLNKKFYGK.

The residue at position 16 (S16) is a Phosphoserine. Residues 41–156 form the Calponin-homology (CH) domain; that stretch reads LCHLEEAKRW…YCIHALSLYL (116 aa). The residue at position 356 (T356) is a Phosphothreonine. Residues 594-627 form the WW domain; the sequence is ESSEGSWVTLNVQEKYNYYYNTDSKEGSWVPPEL. Residues S595 and S599 each carry the phosphoserine modification. 3 IQ domains span residues 690-719, 720-749, and 750-779; these read QTESVVKIQAFWKGFKQRQEYLHRQQVFAG, NVDSVVKIQSWFRMVTARKSYLSRLRYFED, and HKNEIVKIQSLLRASKARDDYKALVGSENP. 4 positions are modified to phosphothreonine: T782, T881, T1002, and T1269. Residues 933 to 1182 form the Ras-GAP domain; it reads YLLLKLFKTA…QEFRKYFQEA (250 aa). Phosphoserine is present on residues S1279 and S1461.

In terms of biological role, binds to activated CDC42 and RAC1 but does not seem to stimulate their GTPase activity. Associates with calmodulin. In Mus musculus (Mouse), this protein is Ras GTPase-activating-like protein IQGAP2 (Iqgap2).